Reading from the N-terminus, the 317-residue chain is Periplasmic [NiFe] hydrogenase small subunit 1 (317 aa).

A signal peptide (tat-type signal) is located at residues 1-49; that stretch reads MRFSVGLGKEGAEERLARRGVSRRDFLKFCTAIAVTMGMGPAFAPEVAR. Residues Cys-67, Cys-70, Cys-164, Cys-200, His-238, Cys-241, Cys-266, and Cys-272 each contribute to the [4Fe-4S] cluster site. [3Fe-4S] cluster contacts are provided by Cys-281, Cys-299, and Cys-302.

The protein belongs to the [NiFe]/[NiFeSe] hydrogenase small subunit family. In terms of assembly, heterodimer of a large and a small subunit. Requires [3Fe-4S] cluster as cofactor. [4Fe-4S] cluster serves as cofactor. In terms of processing, predicted to be exported by the Tat system. The position of the signal peptide cleavage has not been experimentally proven.

It is found in the periplasm. The catalysed reaction is 2 Fe(III)-[cytochrome c3] + H2 = 2 Fe(II)-[cytochrome c3] + 2 H(+). This is Periplasmic [NiFe] hydrogenase small subunit 1 (hynB1) from Nitratidesulfovibrio vulgaris (strain ATCC 29579 / DSM 644 / CCUG 34227 / NCIMB 8303 / VKM B-1760 / Hildenborough) (Desulfovibrio vulgaris).